The primary structure comprises 81 residues: Alpha-toxin Ac1 (81 aa).

Positions 1 to 17 (YIVMISLALVVMIGVES) are cleaved as a signal peptide. The LCN-type CS-alpha/beta domain maps to 19-80 (RDGYIVYPNN…PIKDPSQKCT (62 aa)). 4 disulfides stabilise this stretch: Cys-29–Cys-79, Cys-33–Cys-51, Cys-37–Cys-61, and Cys-41–Cys-63.

Belongs to the long (4 C-C) scorpion toxin superfamily. Sodium channel inhibitor family. Alpha subfamily. Expressed by the venom gland.

The protein resides in the secreted. Functionally, alpha toxins bind voltage-independently at site-3 of sodium channels (Nav) and inhibit the inactivation of the activated channels, thereby blocking neuronal transmission. In Androctonus crassicauda (Arabian fat-tailed scorpion), this protein is Alpha-toxin Ac1.